The chain runs to 476 residues: Doublesex and mab-3 related transcription factor 3 (476 aa).

The segment at residues 29–76 is a DNA-binding region (DM); the sequence is CARCRNHGVLSWLKGHKRYCRFKDCTCEKCILIIERQRVMAAQVALRR. Disordered stretches follow at residues 89–130 and 147–195; these read DSLR…RPAT and GTLP…SKNC. The segment covering 102 to 121 has biased composition (low complexity); that stretch reads DAAATAATASQSSPASQASQ. Positions 176–185 are enriched in basic and acidic residues; sequence FSDKDTDQRS. A DMA domain is found at 255–290; sequence RPPLEVLKKIFPNQKPTVLELILKGCGGDLVSAVEV. Residues 418–432 are compositionally biased toward polar residues; that stretch reads NSTSVFRSSPVLSSR. Residues 418-476 are disordered; sequence NSTSVFRSSPVLSSRTTEDPRISIPDDGCPIVAKQSIYTEDDYDERSDSSDSRILNTSS.

Belongs to the DMRT family.

Its subcellular location is the nucleus. Probable transcription factor that plays a role in configuring the spinal circuits controlling stride in vertebrates. Involved in neuronal specification within a specific subdivision of spinal cord neurons and in the development of a coordinated locomotor network controlling limb movements. May regulate transcription during sexual development. The chain is Doublesex and mab-3 related transcription factor 3 (Dmrt3) from Rattus norvegicus (Rat).